The sequence spans 146 residues: Sordarin/hypoxysordarin biosynthesis cluster protein G (146 aa).

The protein operates within antibiotic biosynthesis. Its function is as follows. Part of the gene cluster that mediates the biosynthesis of sordarin and hypoxysordarin, glycoside antibiotics with a unique tetracyclic diterpene aglycone structure. First, the geranylgeranyl diphosphate synthase sdnC constructs GGDP from farnesyl diphosphate and isopentenyl diphosphate. The diterpene cyclase sdnA then catalyzes the cyclization of GGDP to afford cycloaraneosene. Cycloaraneosene is then hydroxylated four times by the putative cytochrome P450 monooxygenases sdnB, sdnE, sdnF and sdnH to give a hydroxylated cycloaraneosene derivative such as cycloaraneosene-8,9,13,19-tetraol. Although the order of the hydroxylations is unclear, at least C8, C9 and C13 of the cycloaraneosene skeleton are hydroxylated before the sordaricin formation. Dehydration of the 13-hydroxy group of the hydroxylated cycloaraneosene derivative might be catalyzed by an unassigned hypothetical protein such as sdnG and sdnP to construct the cyclopentadiene moiety. The FAD-dependent oxidoreductase sdnN is proposed to catalyze the oxidation at C9 of the hydroxylated cycloaraneosene derivative and also catalyze the Baeyer-Villiger oxidation to give the lactone intermediate. The presumed lactone intermediate would be hydrolyzed to give an acrolein moiety and a carboxylate moiety. Then, [4+2]cycloaddition would occur between the acrolein moiety and the cyclopentadiene moiety to give sordaricin. SdnN might also be involved in the [4+2]cycloaddition after the hypothesized oxidation to accommodate the oxidized product and prompt the [4+2]cycloaddition. GDP-6-deoxy-D-altrose may be biosynthesized from GDP-D-mannose by the putative GDP-mannose-4,6-dehydratase sdnI and the short-chain dehydrogenase sdnK. The glycosyltransferase sdnJ catalyzes the attachment of 6-deoxy-D-altrose onto the 19-hydroxy group of sordaricin to give 4'-O-demethylsordarin. The methyltransferase sdnD would complete the biosynthesis of sordarin. Sordarin can be further modified into hypoxysordarin. The unique acyl chain at the 3'-hydroxy group of hypoxysordarin would be constructed by an iterative type I PKS sdnO and the trans-acting polyketide methyltransferase sdnL. SdnL would be responsible for the introduction of an alpha-methyl group of the polyketide chain. Alternatively, the beta-lactamase-like protein sdnR might be responsible for the cleavage and transfer of the polyketide chain from the PKS sdnO to sordarin. Two putative cytochrome P450 monooxygenases, sdnQ and sdnT, might catalyze the epoxidations of the polyketide chain to complete the biosynthesis of hypoxysordarin. Transcriptional regulators sdnM and sdnS are presumably encoded for the transcriptional regulation of the expression of the sdn gene cluster. This chain is Sordarin/hypoxysordarin biosynthesis cluster protein G, found in Sordaria araneosa (Pleurage araneosa).